Here is a 389-residue protein sequence, read N- to C-terminus: Protein WALLS ARE THIN 1 (389 aa).

The next 10 membrane-spanning stretches (helical) occupy residues 18-38 (LQLH…HVVS), 49-69 (LVFP…FAYF), 76-96 (PAIT…GITA), 111-131 (TFAS…AALL), 143-163 (GISK…ITLY), 198-218 (WTLG…WLVF), 230-250 (LSVT…IAAF), 266-286 (LFTI…VQIW), 294-314 (VFVA…ASIA), and 319-339 (FYLG…FVLY). 2 EamA domains span residues 32 to 161 (AGFH…SVIT) and 210 to 339 (LSWS…FVLY). Serine 372 is subject to Phosphoserine.

This sequence belongs to the drug/metabolite transporter (DMT) superfamily. Plant drug/metabolite exporter (P-DME) (TC 2.A.7.4) family. In terms of tissue distribution, mostly expressed in stems and hypocotyls, also present in seedlings, root, leaves, flowers and siliques. Ubiquitous, mostly expressed in vascular tissues and secondary wall-forming cells, including developing xylem vessels and fibers.

The protein localises to the vacuole membrane. Required for secondary wall formation in fibers, especially in short days conditions. Promotes indole metabolism and transport (e.g. tryptophan, neoglucobrassicin and auxin (indole-3-acetic acid)). May prevent salicylic-acid (SA) accumulation. This Arabidopsis thaliana (Mouse-ear cress) protein is Protein WALLS ARE THIN 1 (WAT1).